A 144-amino-acid polypeptide reads, in one-letter code: Snaclec coagulation factor IX/factor X-binding protein subunit B1 (144 aa).

An N-terminal signal peptide occupies residues 1–23 (MGRFIFVSFGLLVVFLSLSGTAA). 3 cysteine pairs are disulfide-bonded: Cys-25–Cys-36, Cys-53–Cys-142, and Cys-119–Cys-134. The region spanning 32–143 (YEGHCYKPFN…CRMMANFVCE (112 aa)) is the C-type lectin domain.

The protein belongs to the snaclec family. In terms of assembly, heterodimer of subunits A and B1; disulfide-linked. As to expression, expressed by the venom gland.

It localises to the secreted. Its function is as follows. Anticoagulant protein which binds to the gamma-carboxyglutamic acid-domain regions of factors IX (F9) and factor X (F10) in the presence of calcium with a 1 to 1 stoichiometry. The chain is Snaclec coagulation factor IX/factor X-binding protein subunit B1 from Trimeresurus stejnegeri (Chinese green tree viper).